Here is a 429-residue protein sequence, read N- to C-terminus: UPF0053 protein YugS (429 aa).

Helical transmembrane passes span 1 to 21 (MLIL…VFVA), 61 to 81 (ACQL…EPTF), 101 to 121 (IVTF…MGEL), and 133 to 153 (AVSL…YPFI). The 201-residue stretch at 1-201 (MLILQLIAIF…YEKGEINQSE (201 aa)) folds into the CNNM transmembrane domain. CBS domains are found at residues 220–281 (MIPR…PIKL) and 284–341 (IMRP…IRDE).

The protein belongs to the UPF0053 family.

The protein localises to the cell membrane. The polypeptide is UPF0053 protein YugS (yugS) (Bacillus subtilis (strain 168)).